Consider the following 237-residue polypeptide: Protein PetR (237 aa).

Residues 8–121 (HLLIVDDDER…ELLLRINAIL (114 aa)) enclose the Response regulatory domain. Asp57 carries the 4-aspartylphosphate modification. A DNA-binding region (H-T-H motif) is located at residues 77 to 95 (ATPILLLTARGETRERIEG). The ompR/PhoB-type DNA-binding region spans 132 to 236 (PKYLSLGPLR…VRGLGYMLAP (105 aa)).

In terms of biological role, necessary for photosynthetic and respiratory growth. Probable promoter-specific protein mediating the interaction between DNA and RNA polymerase. The chain is Protein PetR (petR) from Rhodobacter capsulatus (strain ATCC BAA-309 / NBRC 16581 / SB1003).